The primary structure comprises 224 residues: Protein-L-isoaspartate O-methyltransferase (224 aa).

Serine 70 is an active-site residue.

It belongs to the methyltransferase superfamily. L-isoaspartyl/D-aspartyl protein methyltransferase family.

The protein resides in the cytoplasm. The catalysed reaction is [protein]-L-isoaspartate + S-adenosyl-L-methionine = [protein]-L-isoaspartate alpha-methyl ester + S-adenosyl-L-homocysteine. Catalyzes the methyl esterification of L-isoaspartyl residues in peptides and proteins that result from spontaneous decomposition of normal L-aspartyl and L-asparaginyl residues. It plays a role in the repair and/or degradation of damaged proteins. This Cellvibrio japonicus (strain Ueda107) (Pseudomonas fluorescens subsp. cellulosa) protein is Protein-L-isoaspartate O-methyltransferase.